Here is a 335-residue protein sequence, read N- to C-terminus: MASRKESAASGSNPLDFPVKQIQVDGLVVLKIIKHYQEEGQGSEVVQGVLLGLVVEDRLEITNCFPFPQHTEDDVEFDEVQYQMEMMRSLRHVNIDHLHVGWYQSTYYGSFVSRALLDSQFSYQHAIEESVVLIYDPLKTAQGSLCLKAYRLTPKLMEICKEKDFTPEGLKKAAVAYEHMFEEVPIFIKNSHLINVLMWDLQEKSTLADKHELLNLSSSNHLEKSLQLLMDRVDDMSQDIVKYNTYCRNLSKQQQQKQQYQQRRQQENAQRQSRGEPPLPEEDISKMFKAPQAPPRMDTLLIAGQINNYCQNIKEFTSQNLGKLFMAEALQSNSS.

One can recognise an MPN domain in the interval 22–156 (IQVDGLVVLK…LKAYRLTPKL (135 aa)). Low complexity predominate over residues 254–272 (QQQKQQYQQRRQQENAQRQ). The tract at residues 254 to 282 (QQQKQQYQQRRQQENAQRQSRGEPPLPEE) is disordered.

This sequence belongs to the eIF-3 subunit H family. Component of the eukaryotic translation initiation factor 3 (eIF-3) complex, which is composed of 13 subunits: eif3a, eif3b, eif3c, eif3d, eif3e, eif3f, eif3g, eif3h, eif3i, eif3j, eif3k, eif3l and eif3m.

The protein resides in the cytoplasm. Functionally, component of the eukaryotic translation initiation factor 3 (eIF-3) complex, which is involved in protein synthesis of a specialized repertoire of mRNAs and, together with other initiation factors, stimulates binding of mRNA and methionyl-tRNAi to the 40S ribosome. The eIF-3 complex specifically targets and initiates translation of a subset of mRNAs involved in cell proliferation. In Danio rerio (Zebrafish), this protein is Eukaryotic translation initiation factor 3 subunit H-A (eif3ha).